The chain runs to 137 residues: Phospholipase A2 group V (137 aa).

An N-terminal signal peptide occupies residues 1–20; sequence MKGLLTLAWFLACSVPAVPG. 6 cysteine pairs are disulfide-bonded: Cys-46/Cys-137, Cys-48/Cys-64, Cys-63/Cys-117, Cys-70/Cys-110, Cys-79/Cys-103, and Cys-97/Cys-108. Residues Tyr-47, Gly-49, and Gly-51 each coordinate Ca(2+). The active site involves His-67. Position 68 (Asp-68) interacts with Ca(2+). Asp-111 is an active-site residue.

It belongs to the phospholipase A2 family. Ca(2+) serves as cofactor. In terms of processing, this enzyme lacks one of the seven disulfide bonds found in similar PA2 proteins. In terms of tissue distribution, expressed in peritoneal macrophages (at protein level). Expressed in heart, skeletal muscle and white adipose tissue.

Its subcellular location is the secreted. The protein resides in the cell membrane. It is found in the cytoplasmic vesicle. It localises to the phagosome. The protein localises to the recycling endosome. Its subcellular location is the golgi apparatus. The protein resides in the cis-Golgi network. It is found in the trans-Golgi network. The enzyme catalyses a 1,2-diacyl-sn-glycero-3-phosphocholine + H2O = a 1-acyl-sn-glycero-3-phosphocholine + a fatty acid + H(+). It carries out the reaction 1-hexadecanoyl-2-(9Z-octadecenoyl)-sn-glycero-3-phosphocholine + H2O = 1-hexadecanoyl-sn-glycero-3-phosphocholine + (9Z)-octadecenoate + H(+). The catalysed reaction is 1-hexadecanoyl-2-(5Z,8Z,11Z,14Z-eicosatetraenoyl)-sn-glycero-3-phosphocholine + H2O = 1-hexadecanoyl-sn-glycero-3-phosphocholine + (5Z,8Z,11Z,14Z)-eicosatetraenoate + H(+). It catalyses the reaction 1-hexadecanoyl-2-(9Z,12Z-octadecadienoyl)-sn-glycero-3-phosphoethanolamine + H2O = 1-hexadecanoyl-sn-glycero-3-phosphoethanolamine + (9Z,12Z)-octadecadienoate + H(+). The enzyme catalyses 1-hexadecanoyl-2-(5Z,8Z,11Z,14Z-eicosatetraenoyl)-sn-glycero-3-phosphoethanolamine + H2O = 1-hexadecanoyl-sn-glycero-3-phosphoethanolamine + (5Z,8Z,11Z,14Z)-eicosatetraenoate + H(+). It carries out the reaction 1-octadecanoyl-2-(5Z,8Z,11Z,14Z-eicosatetraenoyl)-sn-glycero-3-phospho-(1D-myo-inositol) + H2O = 1-octadecanoyl-sn-glycero-3-phospho-(1D-myo-inositol) + (5Z,8Z,11Z,14Z)-eicosatetraenoate + H(+). The catalysed reaction is 1-hexadecanoyl-2-(9Z-octadecenoyl)-sn-glycero-3-phosphoglycerol + H2O = 1-hexadecanoyl-sn-glycero-3-phosphoglycerol + (9Z)-octadecenoate + H(+). It catalyses the reaction N-hexadecanoyl-1,2-di-(9Z-octadecenoyl)-sn-glycero-3-phosphoethanolamine + H2O = N-hexadecanoyl-1-(9Z-octadecenoyl)-sn-glycero-3-phosphoethanolamine + (9Z)-octadecenoate + H(+). The enzyme catalyses 1'-[1,2-di-(9Z-octadecenoyl)-sn-glycero-3-phospho]-3'-[1-(9Z-octadecenoyl)-sn-glycero-3-phospho]-glycerol + H2O = 1',3'-bis-[1-(9Z-octadecenoyl)-sn-glycero-3-phospho]-glycerol + (9Z)-octadecenoate + H(+). It carries out the reaction 1',3'-bis[1,2-di-(9Z-octadecenoyl)-sn-glycero-3-phospho]-glycerol + H2O = 1'-[1,2-di-(9Z-octadecenoyl)-sn-glycero-3-phospho]-3'-[1-(9Z-octadecenoyl)-sn-glycero-3-phospho]-glycerol + (9Z)-octadecenoate + H(+). Its pathway is lipid metabolism; phospholipid metabolism. It functions in the pathway lipid metabolism; leukotriene B4 biosynthesis. The protein operates within lipid metabolism; leukotriene C4 biosynthesis. In terms of biological role, secretory calcium-dependent phospholipase A2 that primarily targets extracellular phospholipids. Hydrolyzes the ester bond of the fatty acyl group attached at sn-2 position of phospholipids (phospholipase A2 activity), preferentially releasing fatty acyl groups with a low degree of unsaturation such as oleoyl (C18:1) and linoleoyl (C18:2) groups. Hydrolyzes low-density lipoprotein (LDL) phospholipids releasing unsaturated fatty acids that drive macrophage polarization toward an M2 phenotype. May act in an autocrine and paracrine manner. Contributes to lipid remodeling of cellular membranes at different subcellular locations and generation of lipid mediators involved in pathogen clearance. Cleaves sn-2 fatty acyl chains of cardiolipin, a major component of the inner membrane of mitochondria and bacterial membranes. Promotes phagocytosis of bacteria in macrophages through production of lysophosphatidylethanolamines. Displays bactericidal activity against Gram-positive bacteria by directly hydrolyzing the phospholipids of the bacterial membrane. Promotes phagocytosis and killing of ingested fungi likely through controlling phagosome-lysosome fusion and phagosome maturation. Plays a role in biosynthesis of cysteinyl leukotrienes (CysLTs) in myeloid cells. In eosinophils, triggers perinuclear arachidonate release and LTC4 synthesis in a PLA2G4A-independent way. In neutrophils, amplifies CysLTs biosynthesis initiated by PLA2G4A. Promotes immune complex clearance in macrophages via stimulating synthesis of CysLTs, which act through CYSLTR1 to trigger phagocytosis. May regulate antigen processing in antigen-presenting cells. In pulmonary macrophages regulates IL33 production required for activation of group 2 innate lymphoid cells. May play a role in the biosynthesis of N-acyl ethanolamines that regulate energy metabolism. Hydrolyzes N-acyl phosphatidylethanolamines to N-acyl lysophosphatidylethanolamines, which are further cleaved by a lysophospholipase D to release N-acyl ethanolamines. The protein is Phospholipase A2 group V (Pla2g5) of Mus musculus (Mouse).